The chain runs to 38 residues: Photosystem II reaction center protein L (38 aa).

Residues 17–37 form a helical membrane-spanning segment; sequence SLFIGLLLVLVLALLFSSYFF.

It belongs to the PsbL family. As to quaternary structure, PSII is composed of 1 copy each of membrane proteins PsbA, PsbB, PsbC, PsbD, PsbE, PsbF, PsbH, PsbI, PsbJ, PsbK, PsbL, PsbM, PsbT, PsbX, PsbY, PsbZ, Psb30/Ycf12, peripheral proteins PsbO, CyanoQ (PsbQ), PsbU, PsbV and a large number of cofactors. It forms dimeric complexes.

The protein resides in the cellular thylakoid membrane. One of the components of the core complex of photosystem II (PSII). PSII is a light-driven water:plastoquinone oxidoreductase that uses light energy to abstract electrons from H(2)O, generating O(2) and a proton gradient subsequently used for ATP formation. It consists of a core antenna complex that captures photons, and an electron transfer chain that converts photonic excitation into a charge separation. This subunit is found at the monomer-monomer interface and is required for correct PSII assembly and/or dimerization. The chain is Photosystem II reaction center protein L from Acaryochloris marina (strain MBIC 11017).